Consider the following 616-residue polypeptide: Dihydroxy-acid dehydratase (616 aa).

Asp-81 is a Mg(2+) binding site. [2Fe-2S] cluster is bound at residue Cys-122. 2 residues coordinate Mg(2+): Asp-123 and Lys-124. Position 124 is an N6-carboxylysine (Lys-124). Cys-195 is a binding site for [2Fe-2S] cluster. Glu-491 is a binding site for Mg(2+). Catalysis depends on Ser-517, which acts as the Proton acceptor.

Belongs to the IlvD/Edd family. Homodimer. [2Fe-2S] cluster is required as a cofactor. It depends on Mg(2+) as a cofactor.

The enzyme catalyses (2R)-2,3-dihydroxy-3-methylbutanoate = 3-methyl-2-oxobutanoate + H2O. It carries out the reaction (2R,3R)-2,3-dihydroxy-3-methylpentanoate = (S)-3-methyl-2-oxopentanoate + H2O. It functions in the pathway amino-acid biosynthesis; L-isoleucine biosynthesis; L-isoleucine from 2-oxobutanoate: step 3/4. Its pathway is amino-acid biosynthesis; L-valine biosynthesis; L-valine from pyruvate: step 3/4. Its function is as follows. Functions in the biosynthesis of branched-chain amino acids. Catalyzes the dehydration of (2R,3R)-2,3-dihydroxy-3-methylpentanoate (2,3-dihydroxy-3-methylvalerate) into 2-oxo-3-methylpentanoate (2-oxo-3-methylvalerate) and of (2R)-2,3-dihydroxy-3-methylbutanoate (2,3-dihydroxyisovalerate) into 2-oxo-3-methylbutanoate (2-oxoisovalerate), the penultimate precursor to L-isoleucine and L-valine, respectively. This chain is Dihydroxy-acid dehydratase, found in Yersinia pseudotuberculosis serotype O:3 (strain YPIII).